Here is a 640-residue protein sequence, read N- to C-terminus: Threonine--tRNA ligase (640 aa).

The 61-residue stretch at 1–61 (MVKITYPDNS…MQDSTIKLIT (61 aa)) folds into the TGS domain. Residues 242 to 533 (DHRKLGPKLN…LIENFAGEFP (292 aa)) form a catalytic region. The Zn(2+) site is built by cysteine 334, histidine 385, and histidine 510.

It belongs to the class-II aminoacyl-tRNA synthetase family. In terms of assembly, homodimer. It depends on Zn(2+) as a cofactor.

The protein localises to the cytoplasm. It catalyses the reaction tRNA(Thr) + L-threonine + ATP = L-threonyl-tRNA(Thr) + AMP + diphosphate + H(+). In terms of biological role, catalyzes the attachment of threonine to tRNA(Thr) in a two-step reaction: L-threonine is first activated by ATP to form Thr-AMP and then transferred to the acceptor end of tRNA(Thr). Also edits incorrectly charged L-seryl-tRNA(Thr). The protein is Threonine--tRNA ligase of Petrotoga mobilis (strain DSM 10674 / SJ95).